A 550-amino-acid polypeptide reads, in one-letter code: Neuronal acetylcholine receptor subunit alpha-9-II (550 aa).

The first 20 residues, 1–20, serve as a signal peptide directing secretion; it reads MRKMVPVVCFATMLLQVAHS. Over 21–233 the chain is Extracellular; sequence AQGRYAQQLL…YTVLLQRRSS (213 aa). Residue asparagine 52 is glycosylated (N-linked (GlcNAc...) asparagine). The cysteines at positions 150 and 164 are disulfide-linked. The N-linked (GlcNAc...) asparagine glycan is linked to asparagine 165. Cysteine 214 and cysteine 215 form a disulfide bridge. Helical transmembrane passes span 234 to 254, 264 to 284, and 298 to 318; these read FYIF…PLGF, VSLG…VAES, and YIAT…IMNI. Topologically, residues 319–528 are cytoplasmic; sequence HFCGAEAKPV…WKRVAKVMDR (210 aa). The disordered stretch occupies residues 357-439; it reads TSSSSSSSSS…HLSSSKYEGF (83 aa). Over residues 358 to 367 the composition is skewed to low complexity; it reads SSSSSSSSSS. Basic residues predominate over residues 413–422; sequence RHPKPRHQHH. A helical transmembrane segment spans residues 529–549; the sequence is FFMWIFFIMVFLMSILIIGKA.

The protein belongs to the ligand-gated ion channel (TC 1.A.9) family. Acetylcholine receptor (TC 1.A.9.1) subfamily. Expressed in the brain, liver, olfactory mucosa, pituitary gland and hair cells of the saccule.

It localises to the postsynaptic cell membrane. Its subcellular location is the cell membrane. The chain is Neuronal acetylcholine receptor subunit alpha-9-II from Oncorhynchus mykiss (Rainbow trout).